The sequence spans 109 residues: uncharacterized protein (109 aa).

A run of 3 helical transmembrane segments spans residues 7–27 (IITIGICIVAVQFTRLLPFFV), 37–57 (YIRYLGKVLPPAMFGMLVVYC), and 63–83 (ILTGYHGIPDLLAGIVVLGLH).

This sequence belongs to the AzlD/HI_1737/HP1330 family.

The protein resides in the cell membrane. This is an uncharacterized protein from Haemophilus influenzae (strain ATCC 51907 / DSM 11121 / KW20 / Rd).